A 118-amino-acid chain; its full sequence is Large ribosomal subunit protein bL20 (118 aa).

Belongs to the bacterial ribosomal protein bL20 family.

In terms of biological role, binds directly to 23S ribosomal RNA and is necessary for the in vitro assembly process of the 50S ribosomal subunit. It is not involved in the protein synthesizing functions of that subunit. This chain is Large ribosomal subunit protein bL20, found in Serratia proteamaculans (strain 568).